Consider the following 358-residue polypeptide: DNA replication and repair protein RecF (358 aa).

An ATP-binding site is contributed by 30 to 37; that stretch reads GNNGSGKT.

This sequence belongs to the RecF family.

It is found in the cytoplasm. The RecF protein is involved in DNA metabolism; it is required for DNA replication and normal SOS inducibility. RecF binds preferentially to single-stranded, linear DNA. It also seems to bind ATP. This chain is DNA replication and repair protein RecF, found in Actinobacillus succinogenes (strain ATCC 55618 / DSM 22257 / CCUG 43843 / 130Z).